Consider the following 703-residue polypeptide: Hyperosmolality-gated Ca2+ permeable channel 2.3 (703 aa).

Topologically, residues 1 to 3 (MLL) are extracellular. A helical transmembrane segment spans residues 4-26 (SALLTSVGINLGLCFLFFTLYSI). Residues 27 to 81 (LRKQPSNVTVYGPRLVKKDGKSQQSNEFNLERLLPTAGWVKRALEPTNDEILSNL) are Cytoplasmic-facing. Residues 82-115 (GLDALVFIRVFVFSIRVFSFASVVGIFILLPVNY) traverse the membrane as a helical segment. Residues 116–143 (MGTEFEEFFDLPKKSMDNFSISNVNDGS) are Extracellular-facing. Residues 144–165 (NKLWIHFCAIYIFTAVVCSLLY) traverse the membrane as a helical segment. Over 166 to 355 (YEHKYILTKR…TASFVRRWIS (190 aa)) the chain is Cytoplasmic. Residues 228–300 (RTDKLKVLMN…LKQSLLAGEE (73 aa)) adopt a coiled-coil conformation. Residues 356-382 (NVVVLVAFVALLILYIVPVVLVQGLAN) form a helical membrane-spanning segment. The Extracellular portion of the chain corresponds to 383 to 410 (LHQLETWFPFLKGILNMKIVSQVITGYL). A helical transmembrane segment spans residues 411-432 (PSLIFQLFLLIVPPIMLLLSSM). The Cytoplasmic segment spans residues 433–436 (QGFI). A helical transmembrane segment spans residues 437 to 463 (SHSQIEKSACIKLLIFTVWNSFFANVL). The Extracellular segment spans residues 464-489 (SGSALYRVNVFLEPKTIPRVLAAAVP). Residues 490–512 (AQASFFVSYVVTSGWTGLSSEIL) form a helical membrane-spanning segment. The Cytoplasmic segment spans residues 513-540 (RLVPLLWSFITKLFGKEDDKEFEVPSTP). A helical transmembrane segment spans residues 541–561 (FCQEIPRILFFGLLGITYFFL). Ser562 is a topological domain (extracellular). A helical membrane pass occupies residues 563–586 (PLILPFLLVYYCLGYIIYRNQLLN). Topologically, residues 587–598 (VYAAKYETGGKF) are cytoplasmic. Residues 599-623 (WPIVHSYTIFSLVLMHIIAVGLFGL) form a helical membrane-spanning segment. At 624 to 626 (KEL) the chain is on the extracellular side. The chain crosses the membrane as a helical span at residues 627–655 (PVASSLTIPLPVLTVLFSIYCQRRFLPNF). Residues 656-703 (KSYPTQCLVNKDKADEREQNMSEFYSELVVAYRDPALSASQDSRDISP) lie on the Cytoplasmic side of the membrane.

Belongs to the CSC1 (TC 1.A.17) family. Homodimer.

The protein localises to the membrane. Functionally, acts as an osmosensitive calcium-permeable cation channel. The protein is Hyperosmolality-gated Ca2+ permeable channel 2.3 of Arabidopsis thaliana (Mouse-ear cress).